Here is a 438-residue protein sequence, read N- to C-terminus: Elongation factor 1-alpha (438 aa).

The region spanning 6–229 (KPHLNIVIIG…ALDTLEVPPK (224 aa)) is the tr-type G domain. The interval 15–22 (GHVDHGKS) is G1. 15–22 (GHVDHGKS) is a binding site for GTP. Position 22 (Ser-22) interacts with Mg(2+). Residues 71–75 (GVTIS) are G2. The segment at 92 to 95 (DAPG) is G3. Residues 92-96 (DAPGH) and 154-157 (NKMD) contribute to the GTP site. Positions 154-157 (NKMD) are G4. The interval 195 to 197 (SAW) is G5.

It belongs to the TRAFAC class translation factor GTPase superfamily. Classic translation factor GTPase family. EF-Tu/EF-1A subfamily.

It is found in the cytoplasm. It carries out the reaction GTP + H2O = GDP + phosphate + H(+). Functionally, GTP hydrolase that promotes the GTP-dependent binding of aminoacyl-tRNA to the A-site of ribosomes during protein biosynthesis. The sequence is that of Elongation factor 1-alpha from Desulfurococcus mucosus (Desulfurococcus mobilis).